The following is a 266-amino-acid chain: Cell division protein FtsQ (266 aa).

Residues 1–31 (MRQKTSSNKKKQKNTNNISLRRKLGLMYKKA) are Cytoplasmic-facing. Residues 32 to 52 (ILGLKIVLMIFVCLFVFTKYF) traverse the membrane as a helical segment. Topologically, residues 53 to 266 (TSIKTYLITN…DRNKYYIQKY (214 aa)) are periplasmic. One can recognise a POTRA domain in the interval 72–140 (FRLENVIIEG…NTVYIKLFER (69 aa)).

The protein belongs to the FtsQ/DivIB family. FtsQ subfamily.

It is found in the cell inner membrane. Functionally, essential cell division protein. This chain is Cell division protein FtsQ, found in Rickettsia typhi (strain ATCC VR-144 / Wilmington).